Reading from the N-terminus, the 1065-residue chain is DNA polymerase III subunit alpha (1065 aa).

It belongs to the DNA polymerase type-C family. DnaE subfamily. DNA polymerase III contains a core (composed of alpha, epsilon and theta chains) that associates with a tau subunit. This core dimerizes to form the PolIII' complex. PolIII' associates with the gamma complex (composed of gamma, delta, delta', psi and chi chains) and with the beta chain to form the complete DNA polymerase III complex.

The protein localises to the cytoplasm. The enzyme catalyses DNA(n) + a 2'-deoxyribonucleoside 5'-triphosphate = DNA(n+1) + diphosphate. Functionally, DNA polymerase III is a complex, multichain enzyme responsible for most of the replicative synthesis in bacteria. This DNA polymerase also exhibits 3' to 5' exonuclease activity. The alpha chain is the DNA polymerase. This is DNA polymerase III subunit alpha (dnaE) from Staphylococcus aureus (strain MSSA476).